Consider the following 471-residue polypeptide: A-type ATP synthase subunit B (471 aa).

The protein belongs to the ATPase alpha/beta chains family. Has multiple subunits with at least A(3), B(3), C, D, E, F, H, I and proteolipid K(x).

The protein localises to the cell membrane. In terms of biological role, component of the A-type ATP synthase that produces ATP from ADP in the presence of a proton gradient across the membrane. The B chain is a regulatory subunit. The chain is A-type ATP synthase subunit B from Ignicoccus hospitalis (strain KIN4/I / DSM 18386 / JCM 14125).